The following is a 378-amino-acid chain: Prolargin (378 aa).

The N-terminal stretch at methionine 1 to glycine 21 is a signal peptide. Positions glutamine 22–proline 62 are disordered. Over residues proline 28–proline 38 the composition is skewed to basic residues. Pro residues predominate over residues threonine 39–proline 62. LRR repeat units follow at residues arginine 91 to isoleucine 110, threonine 111 to isoleucine 134, arginine 135 to leucine 158, glutamate 159 to isoleucine 179, serine 180 to leucine 203, serine 204 to leucine 229, arginine 230 to isoleucine 250, glutamate 251 to leucine 274, serine 275 to isoleucine 299, serine 300 to isoleucine 319, glutamate 320 to leucine 358, and lysine 359 to isoleucine 378. An N-linked (GlcNAc...) asparagine glycan is attached at asparagine 120. Asparagine 285, asparagine 316, and asparagine 323 each carry an N-linked (GlcNAc...) asparagine glycan. Cysteine 328 and cysteine 369 are disulfide-bonded.

It belongs to the small leucine-rich proteoglycan (SLRP) family. SLRP class II subfamily. As to quaternary structure, binds the basement membrane heparan sulfate proteoglycan perlecan and triple helical collagens type I and type II. In terms of processing, glycosylated; contains heparan sulfate. Expressed in cartilage throughout both fetal development and postnatal life. It is also expressed in the developing embryo prior to skeletogenesis. In adult, highest expression in lung, lower levels in cardiac and skeletal muscle.

The protein localises to the secreted. The protein resides in the extracellular space. It is found in the extracellular matrix. Functionally, may anchor basement membranes to the underlying connective tissue. This chain is Prolargin (Prelp), found in Mus musculus (Mouse).